The chain runs to 860 residues: Leucine--tRNA ligase (860 aa).

Positions 42-52 (PYPSGRLHMGH) match the 'HIGH' region motif. Residues 619 to 623 (KMSKS) carry the 'KMSKS' region motif. ATP is bound at residue K622.

The protein belongs to the class-I aminoacyl-tRNA synthetase family.

Its subcellular location is the cytoplasm. It catalyses the reaction tRNA(Leu) + L-leucine + ATP = L-leucyl-tRNA(Leu) + AMP + diphosphate. The sequence is that of Leucine--tRNA ligase from Proteus mirabilis (strain HI4320).